Here is a 223-residue protein sequence, read N- to C-terminus: Ribosomal RNA small subunit methyltransferase G (223 aa).

3 residues coordinate S-adenosyl-L-methionine: G85, F90, and R154.

Belongs to the methyltransferase superfamily. RNA methyltransferase RsmG family.

Its subcellular location is the cytoplasm. The enzyme catalyses guanosine(527) in 16S rRNA + S-adenosyl-L-methionine = N(7)-methylguanosine(527) in 16S rRNA + S-adenosyl-L-homocysteine. Functionally, specifically methylates the N7 position of guanine in position 527 of 16S rRNA. The protein is Ribosomal RNA small subunit methyltransferase G of Rhodopseudomonas palustris (strain TIE-1).